The following is a 257-amino-acid chain: Pyrroline-5-carboxylate reductase (257 aa).

The protein belongs to the pyrroline-5-carboxylate reductase family.

Its subcellular location is the cytoplasm. The catalysed reaction is L-proline + NADP(+) = (S)-1-pyrroline-5-carboxylate + NADPH + 2 H(+). It carries out the reaction L-proline + NAD(+) = (S)-1-pyrroline-5-carboxylate + NADH + 2 H(+). It participates in amino-acid biosynthesis; L-proline biosynthesis; L-proline from L-glutamate 5-semialdehyde: step 1/1. Catalyzes the reduction of 1-pyrroline-5-carboxylate (PCA) to L-proline. The polypeptide is Pyrroline-5-carboxylate reductase (Helicobacter pylori (strain J99 / ATCC 700824) (Campylobacter pylori J99)).